Here is a 426-residue protein sequence, read N- to C-terminus: UDP-N-acetylglucosamine--N-acetylmuramyl-(pentapeptide) pyrophosphoryl-undecaprenol N-acetylglucosamine transferase (426 aa).

Residues 28–30 (TGG), Asn140, Arg176, Ser204, Ile257, and Gln302 contribute to the UDP-N-acetyl-alpha-D-glucosamine site. The interval 369 to 388 (AGNGPSGMGNGHSSEQPQER) is disordered.

This sequence belongs to the glycosyltransferase 28 family. MurG subfamily.

It localises to the cell inner membrane. It carries out the reaction di-trans,octa-cis-undecaprenyl diphospho-N-acetyl-alpha-D-muramoyl-L-alanyl-D-glutamyl-meso-2,6-diaminopimeloyl-D-alanyl-D-alanine + UDP-N-acetyl-alpha-D-glucosamine = di-trans,octa-cis-undecaprenyl diphospho-[N-acetyl-alpha-D-glucosaminyl-(1-&gt;4)]-N-acetyl-alpha-D-muramoyl-L-alanyl-D-glutamyl-meso-2,6-diaminopimeloyl-D-alanyl-D-alanine + UDP + H(+). It functions in the pathway cell wall biogenesis; peptidoglycan biosynthesis. In terms of biological role, cell wall formation. Catalyzes the transfer of a GlcNAc subunit on undecaprenyl-pyrophosphoryl-MurNAc-pentapeptide (lipid intermediate I) to form undecaprenyl-pyrophosphoryl-MurNAc-(pentapeptide)GlcNAc (lipid intermediate II). This chain is UDP-N-acetylglucosamine--N-acetylmuramyl-(pentapeptide) pyrophosphoryl-undecaprenol N-acetylglucosamine transferase, found in Xanthomonas axonopodis pv. citri (strain 306).